The sequence spans 597 residues: Arginine--tRNA ligase (597 aa).

Positions 124–134 match the 'HIGH' region motif; the sequence is PNVAKPLHVGH.

Belongs to the class-I aminoacyl-tRNA synthetase family. As to quaternary structure, monomer.

The protein localises to the cytoplasm. The catalysed reaction is tRNA(Arg) + L-arginine + ATP = L-arginyl-tRNA(Arg) + AMP + diphosphate. The chain is Arginine--tRNA ligase from Agathobacter rectalis (strain ATCC 33656 / DSM 3377 / JCM 17463 / KCTC 5835 / VPI 0990) (Eubacterium rectale).